Here is a 328-residue protein sequence, read N- to C-terminus: Phospholipid scramblase 1 (328 aa).

A proline-rich domain (PRD) region spans residues 1-93 (MENHSKQTEA…NHPGGPGGTP (93 aa)). Residues 1-96 (MENHSKQTEA…GGPGGTPWMP (96 aa)) are disordered. At 1–297 (MENHSKQTEA…IQFPLDLDVK (297 aa)) the chain is on the cytoplasmic side. Residues 18–26 (PAGYPPPYP) carry the SH3-binding 1 motif. Positions 22 to 25 (PPPY) match the PPxY motif motif. The span at 28 to 47 (AAFQGPSDHAAYPIPQAGYQ) shows a compositional bias: low complexity. Residues 49–64 (PPGPYPGPQPGYPVPP) are compositionally biased toward pro residues. An SH3-binding 2 motif is present at residues 56 to 64 (PQPGYPVPP). At tyrosine 83 the chain carries Phosphotyrosine; by ABL. The short motif at 93-101 (PWMPAPPPP) is the SH3-binding 3 element. Phosphothreonine; by PKC/PRKCD is present on threonine 170. Residues cysteine 193, cysteine 194, cysteine 197, and cysteine 198 are each lipidated (S-palmitoyl cysteine). Residues 269–275 (SKQWSGF) carry the Nuclear localization signal motif. Residues 298 to 314 (MKAVMLGACFLIDFMFF) traverse the membrane as a helical segment. The Extracellular portion of the chain corresponds to 315 to 328 (ERTGNEEQRSGAWQ).

It belongs to the phospholipid scramblase family. Forms homooligomers in the presence of calcium. Interacts with ABL. Interacts with RELT, RELL1 and RELL2. Interacts with OXSR1 in the presence of RELT. Interacts with OCLN, TOP2A and TOP2B. Interacts with TRPC1, TRPC4 and TRPC5. Interacts with ILDR1. The cofactor is Ca(2+). Mg(2+) is required as a cofactor. It depends on Zn(2+) as a cofactor. In terms of processing, phosphorylation at Thr-170 by PKC/PKCD increases its phospholipid scramblase activity during both cell stimulation and apoptosis. Phosphorylated by OXSR1 in the presence of RELT. Palmitoylation is required for its phospholipid scramblase activity. Palmitoylation regulates its localization to the cell membrane or the nucleus; trafficking to the cell membrane is dependent upon palmitoylation whereas in the absence of palmitoylation, localizes to the nucleus. In terms of tissue distribution, highly expressed in kidney, lung, liver and bone marrow, slightly in spleen, heart and macrophage.

The protein localises to the cell membrane. It is found in the nucleus. Its subcellular location is the cytoplasm. The protein resides in the perinuclear region. The catalysed reaction is a 1,2-diacyl-sn-glycero-3-phosphocholine(in) = a 1,2-diacyl-sn-glycero-3-phosphocholine(out). It catalyses the reaction a 1,2-diacyl-sn-glycero-3-phosphoethanolamine(in) = a 1,2-diacyl-sn-glycero-3-phosphoethanolamine(out). It carries out the reaction a 1,2-diacyl-sn-glycero-3-phospho-L-serine(in) = a 1,2-diacyl-sn-glycero-3-phospho-L-serine(out). Its function is as follows. Catalyzes calcium-induced ATP-independent rapid bidirectional and non-specific distribution of phospholipids (lipid scrambling or lipid flip-flop) between the inner and outer leaflet of the plasma membrane resulting in collapse of the phospholipid asymmetry which leads to phosphatidylserine externalization on the cell surface. Mediates calcium-dependent phosphatidylserine externalization and apoptosis in neurons via its association with TRPC5. Also exhibits magnesium-dependent nuclease activity against double-stranded DNA and RNA but not single-stranded DNA and can enhance DNA decatenation mediated by TOP2A. Negatively regulates FcR-mediated phagocytosis in differentiated macrophages. May contribute to cytokine-regulated cell proliferation and differentiation. The chain is Phospholipid scramblase 1 (Plscr1) from Mus musculus (Mouse).